The following is a 236-amino-acid chain: Glucosamine-6-phosphate deaminase (236 aa).

Residue D62 is the Proton acceptor; for enolization step of the active site. The active-site For ring-opening step is N128. The Proton acceptor; for ring-opening step role is filled by H130. The For ring-opening step role is filled by E135.

Belongs to the glucosamine/galactosamine-6-phosphate isomerase family. NagB subfamily.

It catalyses the reaction alpha-D-glucosamine 6-phosphate + H2O = beta-D-fructose 6-phosphate + NH4(+). It participates in amino-sugar metabolism; N-acetylneuraminate degradation; D-fructose 6-phosphate from N-acetylneuraminate: step 5/5. Functionally, catalyzes the reversible isomerization-deamination of glucosamine 6-phosphate (GlcN6P) to form fructose 6-phosphate (Fru6P) and ammonium ion. The sequence is that of Glucosamine-6-phosphate deaminase from Oenococcus oeni (strain ATCC BAA-331 / PSU-1).